The sequence spans 398 residues: 1-deoxy-D-xylulose 5-phosphate reductoisomerase (398 aa).

Residues threonine 10, glycine 11, serine 12, isoleucine 13, asparagine 38, and asparagine 124 each contribute to the NADPH site. Lysine 125 contacts 1-deoxy-D-xylulose 5-phosphate. NADPH is bound at residue glutamate 126. Residue aspartate 150 coordinates Mn(2+). The 1-deoxy-D-xylulose 5-phosphate site is built by serine 151, glutamate 152, serine 186, and histidine 209. Glutamate 152 serves as a coordination point for Mn(2+). Glycine 215 is a binding site for NADPH. Serine 222, asparagine 227, lysine 228, and glutamate 231 together coordinate 1-deoxy-D-xylulose 5-phosphate. Residue glutamate 231 participates in Mn(2+) binding.

Belongs to the DXR family. Mg(2+) serves as cofactor. Requires Mn(2+) as cofactor.

The catalysed reaction is 2-C-methyl-D-erythritol 4-phosphate + NADP(+) = 1-deoxy-D-xylulose 5-phosphate + NADPH + H(+). The protein operates within isoprenoid biosynthesis; isopentenyl diphosphate biosynthesis via DXP pathway; isopentenyl diphosphate from 1-deoxy-D-xylulose 5-phosphate: step 1/6. Catalyzes the NADPH-dependent rearrangement and reduction of 1-deoxy-D-xylulose-5-phosphate (DXP) to 2-C-methyl-D-erythritol 4-phosphate (MEP). The chain is 1-deoxy-D-xylulose 5-phosphate reductoisomerase from Baumannia cicadellinicola subsp. Homalodisca coagulata.